The primary structure comprises 890 residues: Possible lysine-specific histone demethylase 1 (890 aa).

Over residues 1–13 the composition is skewed to polar residues; that stretch reads MKPTQFGGSSSKM. The interval 1 to 164 is disordered; it reads MKPTQFGGSS…TVLSGQEGAV (164 aa). Ser24 and Ser27 each carry phosphoserine. Over residues 84 to 109 the composition is skewed to polar residues; the sequence is NRPSGSGDTASNDKSGSASMGPNNQQ. The span at 110–122 shows a compositional bias: basic and acidic residues; the sequence is AERRSQSQTRKSE. The segment covering 123-138 has biased composition (low complexity); that stretch reads ANATSSSVSGPSAGNS. The 100-residue stretch at 160-259 folds into the SWIRM domain; it reads QEGAVFQSRL…FGIFKRLKPI (100 aa). 267–295 is a binding site for FAD; sequence VIVIGAGISGLAVAHQLQQFGMDVIVLEA. The interval 860 to 890 is disordered; that stretch reads DLSPNLSDSSPSSKKSEENSNSNTADSTELQ. Low complexity predominate over residues 861–882; sequence LSPNLSDSSPSSKKSEENSNSN. Residue Ser866 is modified to Phosphoserine.

It belongs to the flavin monoamine oxidase family. Component of a complex that contains at least HDAC1/Rpd3, CoRest and Su(var)3-3/Hdm. The cofactor is FAD.

It localises to the nucleus. The protein localises to the chromosome. Functionally, probable histone demethylase that specifically demethylates 'Lys-4' of histone H3, a specific tag for epigenetic transcriptional activation, thereby acting as a corepressor. Required for heterochromatic gene silencing. Acts by oxidizing the substrate by FAD to generate the corresponding imine that is subsequently hydrolyzed. Demethylates both mono- and tri-methylated 'Lys-4' of histone H3. May also demethylate 'Lys-9' of histone H3, Plays a role in the repression of neuronal genes. This is Possible lysine-specific histone demethylase 1 (Su(var)3-3) from Drosophila melanogaster (Fruit fly).